We begin with the raw amino-acid sequence, 91 residues long: Bacterial microcompartment shell protein PduJ (91 aa).

Residues 4–88 (ALGLVETKGL…PHSDVEAILP (85 aa)) enclose the BMC domain.

The protein belongs to the bacterial microcompartments protein family. Homohexamer with a central pore of about 5.7 Angstroms in diameter. Interacts with PduP, which targets PduP to the BMC.

The protein localises to the bacterial microcompartment. Its pathway is polyol metabolism; 1,2-propanediol degradation. Functionally, one of the major shell proteins of the bacterial microcompartment (BMC) dedicated to 1,2-propanediol (1,2-PD) degradation. The isolated BMC shell component protein ratio for J:A:B':B:K:T:U is approximately 15:10:7:6:1:1:2. At least one of PduA or PduJ is required for BMC assembly; it must be encoded as the first gene in the pdu operon. Required for structural integrity of BMCs and to mitigate propionaldehyde toxicity, probably joins facets responsible for BMC closure. Edge residues (particularly Lys-25) are important for function and assembly of the BMC. 80% identical to PduA; although their pore regions appear structurally identical, unlike PduA plays no role in 1,2-PD diffusion into or out of the BMC shell. If pduJ is cloned in the chromosomal position of pduA it is able to complement a pduA deletion; it then has a functional pore as it assumes the transport functions of PduA. Overexpression of this protein leads to aberrant filaments that extend the length of the cell, cross the cleavage furrow and impair division. The filaments form nanotubes with a hollow center. Modeling suggests PduJ is probably the hub for binding multiple enzymes to the interior of the BMC; modeling suggests PduC, PduD, PduG and PduM are targeted to PduJ. The 1,2-propanediol (1,2-PD) degradation bacterial microcompartment (BMC) concentrates low levels of 1,2-PD catabolic enzymes, concentrates volatile reaction intermediates thus enhancing pathway flux and keeps the level of toxic, mutagenic propionaldehyde low. This chain is Bacterial microcompartment shell protein PduJ, found in Salmonella typhimurium (strain LT2 / SGSC1412 / ATCC 700720).